The following is a 94-amino-acid chain: Small ribosomal subunit protein uS19c (94 aa).

The protein belongs to the universal ribosomal protein uS19 family.

The protein resides in the plastid. Its function is as follows. Protein S19 forms a complex with S13 that binds strongly to the 16S ribosomal RNA. This chain is Small ribosomal subunit protein uS19c (rps19), found in Epifagus virginiana (Beechdrops).